The sequence spans 46 residues: Esculentin-1GRa (46 aa).

In terms of tissue distribution, expressed by the skin glands.

Its subcellular location is the secreted. In terms of biological role, antimicrobial peptide active against the Gram-positive bacterium S.aureus (MIC=12.5 uM) and against the Gram-negative bacterium E.coli (MIC=6 uM). Has no antifungal activity against C.albicans. Shows hemolytic activity against human erythrocytes only at high concentrations (LC(50)=210 uM). This Odorrana grahami (Yunnanfu frog) protein is Esculentin-1GRa.